A 202-amino-acid chain; its full sequence is Small ribosomal subunit protein uS5 (202 aa).

The S5 DRBM domain occupies 50–113 (LKQELLNVNI…REAKLNLIPV (64 aa)).

The protein belongs to the universal ribosomal protein uS5 family. In terms of assembly, part of the 30S ribosomal subunit. Contacts protein S4.

In terms of biological role, with S4 and S12 plays an important role in translational accuracy. This is Small ribosomal subunit protein uS5 from Pyrobaculum arsenaticum (strain DSM 13514 / JCM 11321 / PZ6).